We begin with the raw amino-acid sequence, 100 residues long: NADH-quinone oxidoreductase subunit K (100 aa).

The next 3 helical transmembrane spans lie at 2–22, 28–48, and 60–80; these read IPLQ…LTGV, LLFM…AFVV, and VMFI…LALL.

Belongs to the complex I subunit 4L family. NDH-1 is composed of 13 different subunits. Subunits NuoA, H, J, K, L, M, N constitute the membrane sector of the complex.

The protein localises to the cell inner membrane. The catalysed reaction is a quinone + NADH + 5 H(+)(in) = a quinol + NAD(+) + 4 H(+)(out). In terms of biological role, NDH-1 shuttles electrons from NADH, via FMN and iron-sulfur (Fe-S) centers, to quinones in the respiratory chain. The immediate electron acceptor for the enzyme in this species is believed to be ubiquinone. Couples the redox reaction to proton translocation (for every two electrons transferred, four hydrogen ions are translocated across the cytoplasmic membrane), and thus conserves the redox energy in a proton gradient. The chain is NADH-quinone oxidoreductase subunit K from Erwinia tasmaniensis (strain DSM 17950 / CFBP 7177 / CIP 109463 / NCPPB 4357 / Et1/99).